Here is a 950-residue protein sequence, read N- to C-terminus: Leucine--tRNA ligase (950 aa).

A 'HIGH' region motif is present at residues 42-52 (PYLNGNLHAGH). Residues 629–633 (KMSKS) carry the 'KMSKS' region motif. Lys-632 lines the ATP pocket. Residues 928 to 950 (NPPYDPKGRAQNAEPGRPAIYIE) form a disordered region.

Belongs to the class-I aminoacyl-tRNA synthetase family.

The protein resides in the cytoplasm. It carries out the reaction tRNA(Leu) + L-leucine + ATP = L-leucyl-tRNA(Leu) + AMP + diphosphate. The chain is Leucine--tRNA ligase from Methanothrix thermoacetophila (strain DSM 6194 / JCM 14653 / NBRC 101360 / PT) (Methanosaeta thermophila).